The chain runs to 249 residues: MNEVIKSLTDHRSIRSYTDEPVAQEQLDQIIEAVQSAPSSINGQQVTVITVQDKERKKKISELAGGQPWIDQAPVFLLFCADFNRAKIALEDLHDFKMEITNGLESVLVGAVDAGIALGTATAAAESLGLGTVPIGAVRGNPQELIELLELPKYVFPLSGLVIGHPADRSAKKPRLPQEAVNHQETYLNQDELTSHIQAYDEQMSEYMNKRTNGKETRNWSQSIASYYERLYYPHIREMLEKQGFKVEK.

Residues 11–15, Gln67, 134–136, and 173–175 contribute to the FMN site; these read HRSIR, PIG, and KPR.

This sequence belongs to the flavin oxidoreductase frp family. As to quaternary structure, homodimer.

The catalysed reaction is FMNH2 + NADP(+) = FMN + NADPH + 2 H(+). It carries out the reaction FMNH2 + NAD(+) = FMN + NADH + 2 H(+). FMN is a competitive inhibitor of NADH, and therefore leads to the preferential utilization of NADPH. Reduces FMNH(2) to FMN, with NADH or NADPH as reductant. It also reduces nitroaromatic compounds, quinones, chromates and azo dyes. It could supply the reduced form of FMN to luciferase-like protein and contribute to the degradation of aromatic compounds. The polypeptide is FMN reductase [NAD(P)H] (nfrA2) (Bacillus subtilis (strain 168)).